Consider the following 343-residue polypeptide: Protein RecA (343 aa).

66-73 (GPESSGKT) contacts ATP.

The protein belongs to the RecA family.

It localises to the cytoplasm. Functionally, can catalyze the hydrolysis of ATP in the presence of single-stranded DNA, the ATP-dependent uptake of single-stranded DNA by duplex DNA, and the ATP-dependent hybridization of homologous single-stranded DNAs. It interacts with LexA causing its activation and leading to its autocatalytic cleavage. The polypeptide is Protein RecA (Rickettsia africae (strain ESF-5)).